The primary structure comprises 185 residues: Elongation factor P (185 aa).

This sequence belongs to the elongation factor P family.

It is found in the cytoplasm. The protein operates within protein biosynthesis; polypeptide chain elongation. Involved in peptide bond synthesis. Stimulates efficient translation and peptide-bond synthesis on native or reconstituted 70S ribosomes in vitro. Probably functions indirectly by altering the affinity of the ribosome for aminoacyl-tRNA, thus increasing their reactivity as acceptors for peptidyl transferase. The protein is Elongation factor P of Mesomycoplasma hyopneumoniae (strain J / ATCC 25934 / NCTC 10110) (Mycoplasma hyopneumoniae).